A 346-amino-acid polypeptide reads, in one-letter code: MSGNNSSLSYKDAGVDIDAGNALVDRIKGVVKRTHRPEVMGGIGGFGALCSLPTKYKEPILVSGTDGVGTKLRLAMDLNKHDTIGIDLVAMCVNDLIVQGGEPLFFLDYYATGKLDVDTAASVVAGIGEGCIQAGCALIGGETAEMPGMYHGEDYDVAGFCVGVVEKADIIDGSKVQAGDALIAVGSSGPHSNGYSLVRKIIEVSNADLNEELEGKSLADHLLTPTKIYVKSTLKMMESCDVHAISHITGGGFWENIPRVLPEGAKAVVDGNSWQWPAIFNWLQTAGNVETYEMYRTFNCGVGLVIALPQAQAEQAIEILKAEGENAWLLGSIANAEVGEEQVEIK.

The protein belongs to the AIR synthase family.

Its subcellular location is the cytoplasm. The catalysed reaction is 2-formamido-N(1)-(5-O-phospho-beta-D-ribosyl)acetamidine + ATP = 5-amino-1-(5-phospho-beta-D-ribosyl)imidazole + ADP + phosphate + H(+). It participates in purine metabolism; IMP biosynthesis via de novo pathway; 5-amino-1-(5-phospho-D-ribosyl)imidazole from N(2)-formyl-N(1)-(5-phospho-D-ribosyl)glycinamide: step 2/2. The chain is Phosphoribosylformylglycinamidine cyclo-ligase from Photobacterium profundum (strain SS9).